We begin with the raw amino-acid sequence, 265 residues long: 3-methyl-2-oxobutanoate hydroxymethyltransferase (265 aa).

Asp-44 and Asp-83 together coordinate Mg(2+). 3-methyl-2-oxobutanoate-binding positions include 44-45 (DS), Asp-83, and Lys-113. Glu-115 serves as a coordination point for Mg(2+). Residue Glu-182 is the Proton acceptor of the active site.

This sequence belongs to the PanB family. As to quaternary structure, homodecamer; pentamer of dimers. Mg(2+) serves as cofactor.

Its subcellular location is the cytoplasm. The catalysed reaction is 3-methyl-2-oxobutanoate + (6R)-5,10-methylene-5,6,7,8-tetrahydrofolate + H2O = 2-dehydropantoate + (6S)-5,6,7,8-tetrahydrofolate. The protein operates within cofactor biosynthesis; (R)-pantothenate biosynthesis; (R)-pantoate from 3-methyl-2-oxobutanoate: step 1/2. Functionally, catalyzes the reversible reaction in which hydroxymethyl group from 5,10-methylenetetrahydrofolate is transferred onto alpha-ketoisovalerate to form ketopantoate. The chain is 3-methyl-2-oxobutanoate hydroxymethyltransferase from Aquifex aeolicus (strain VF5).